The chain runs to 1159 residues: DNA-directed RNA polymerase subunit beta (1159 aa).

It belongs to the RNA polymerase beta chain family. As to quaternary structure, the RNAP catalytic core consists of 2 alpha, 1 beta, 1 beta' and 1 omega subunit. When a sigma factor is associated with the core the holoenzyme is formed, which can initiate transcription.

The catalysed reaction is RNA(n) + a ribonucleoside 5'-triphosphate = RNA(n+1) + diphosphate. In terms of biological role, DNA-dependent RNA polymerase catalyzes the transcription of DNA into RNA using the four ribonucleoside triphosphates as substrates. This Deinococcus radiodurans (strain ATCC 13939 / DSM 20539 / JCM 16871 / CCUG 27074 / LMG 4051 / NBRC 15346 / NCIMB 9279 / VKM B-1422 / R1) protein is DNA-directed RNA polymerase subunit beta.